A 186-amino-acid chain; its full sequence is Dihydrofolate reductase (186 aa).

The DHFR domain occupies lysine 3–lysine 183. NADP(+) is bound by residues alanine 9 and glycine 15 to aspartate 21. Glutamate 29–serine 34 serves as a coordination point for substrate. Arginine 53–threonine 55 contributes to the NADP(+) binding site. Residue arginine 69 participates in substrate binding. NADP(+)-binding positions include threonine 75–aspartate 77 and glycine 116–glutamate 123.

Belongs to the dihydrofolate reductase family.

It catalyses the reaction (6S)-5,6,7,8-tetrahydrofolate + NADP(+) = 7,8-dihydrofolate + NADPH + H(+). It participates in cofactor biosynthesis; tetrahydrofolate biosynthesis; 5,6,7,8-tetrahydrofolate from 7,8-dihydrofolate: step 1/1. Functionally, key enzyme in folate metabolism. Catalyzes an essential reaction for de novo glycine and purine synthesis, and for DNA precursor synthesis. The chain is Dihydrofolate reductase (DHFR) from Aedes albopictus (Asian tiger mosquito).